The sequence spans 645 residues: Octopamine receptor Oamb (645 aa).

Topologically, residues 1-25 are extracellular; sequence MNETECEDLIKSVKWTEPANLISLA. N-linked (GlcNAc...) asparagine glycosylation occurs at Asn-2. The helical transmembrane segment at 26–46 threads the bilayer; that stretch reads VLEFINVLVIGGNCLVIAAVF. Residues 47–56 lie on the Cytoplasmic side of the membrane; sequence CSNKLRSVTN. Residues 57-77 traverse the membrane as a helical segment; sequence FFIVNLAVADLLVGLAVLPFS. The Extracellular portion of the chain corresponds to 78-94; sequence ATWEVFKVWIFGDLWCR. A disulfide bridge connects residues Cys-93 and Cys-287. A helical transmembrane segment spans residues 95–115; that stretch reads IWLAVDVWMCTASILNLCAIS. Topologically, residues 116-138 are cytoplasmic; that stretch reads LDRYVAVTRPVTYPSIMSTKKAK. Residues 139–159 traverse the membrane as a helical segment; that stretch reads SLIAGIWVLSFFICFPPLVGW. At 160–295 the chain is on the extracellular side; that stretch reads KDQKAVIQPT…KCELTNDRGY (136 aa). Residue Asn-174 is glycosylated (N-linked (GlcNAc...) asparagine). Positions 190–212 are disordered; sequence QLGLDSIKDQGEASLPPSPPHIG. Residues 296-316 form a helical membrane-spanning segment; it reads VLYSALGSFYIPMFVMLFFYW. The Cytoplasmic portion of the chain corresponds to 317 to 520; it reads RIYRAAVRTT…FRMETKAAKT (204 aa). Disordered regions lie at residues 358–386 and 479–500; these read GRGSNQQDSMHSNGSTQSTTTTLGTPSPE and RQSNTSEAGGSGHSRPANKKMG. Over residues 369–385 the composition is skewed to low complexity; it reads SNGSTQSTTTTLGTPSP. A helical membrane pass occupies residues 521–541; that stretch reads LAIIVGMFIFCWCPFFTMYII. Residues 542–551 are Extracellular-facing; the sequence is RPFCQDCVDP. A helical transmembrane segment spans residues 552 to 572; that stretch reads LLFSVLFWLGYCNSAVNPMIY. The Cytoplasmic portion of the chain corresponds to 573–645; it reads ALFSKDFRFA…HHSEMSNDPR (73 aa). The tract at residues 621-645 is disordered; sequence TPSAAAHSFGDESELHHSEMSNDPR. The segment covering 629 to 645 has biased composition (basic and acidic residues); it reads FGDESELHHSEMSNDPR.

It belongs to the G-protein coupled receptor 1 family. Highly enriched in mushroom body neuropil and in the ellipsoid body (at protein level). Expressed in oviduct epithelium (at protein level). Expressed in the adult and larval brain, thoracic and abdominal ganglia, terminal cells of the larval tracheal system, muscle, mature eggs and reproductive system.

It localises to the cell membrane. Receptor for octopamine (OA) which is a neurotransmitter, neurohormone and neuromodulator in invertebrates. Stimulates intracellular accumulation of cAMP and Ca(2+) following ligand binding. Required for ovulation. Following activation on mature follicle cells by OA, induces activity of the metalloprotease Mmp2 which leads to breakdown of the posterior follicle wall, resulting in ovulation. Ligand binding probably also leads to activation of CamKII which is also required for ovulation. Modulates sleep/wake behavior by acting in neurons of the pars intercerebralis to promote wakefulness. Plays a role in courtship conditioning where the courtship behavior of males rejected by already mated females is inhibited with further females. Required in the mushroom body for appetitive olfactory learning. Specifically conveys the short-term reinforcing effects of sweet taste. In insulin-producing cells of the brain, plays a role in inhibiting transcription of insulin-like peptide Ilp3. Also plays a role in social behavior by modulating male agression. This is Octopamine receptor Oamb from Drosophila melanogaster (Fruit fly).